A 524-amino-acid chain; its full sequence is uncharacterized protein (524 aa).

Residues 1–65 form a disordered region; sequence MSDPFFTRPE…IDEENEDTYE (65 aa). Positions 21 to 32 are enriched in basic and acidic residues; sequence SKREKENQKLER. The span at 51–64 shows a compositional bias: acidic residues; it reads GFEDEIDEENEDTY. WD repeat units lie at residues 131 to 176, 206 to 245, 248 to 287, 290 to 329, 342 to 380, 409 to 448, and 457 to 503; these read IETA…DTEN, DHVKEITCLAISNDGRWIVTGGLDHRIVIRDSVTLEPQHC, HHRDAVMGLAMRRGTNEMFSCSADRSIKVWSLDQMSYIET, GHQDVIFGVDALARERCVSVGGRDRTSRLWKIVEESQLVF, YMEGSVDCVAMIDEDHFVTGSDNGVIALWSVQRKKPLFT, PQPRWITSLAAIPYSNLFASGSWDGNIRLWKIAEGLRSFE, and SVYG…PNSG.

It localises to the nucleus. This is an uncharacterized protein from Schizosaccharomyces pombe (strain 972 / ATCC 24843) (Fission yeast).